A 239-amino-acid polypeptide reads, in one-letter code: Probable transcriptional regulatory protein BC_0539 (239 aa).

This sequence belongs to the TACO1 family. YeeN subfamily.

The protein resides in the cytoplasm. The polypeptide is Probable transcriptional regulatory protein BC_0539 (Bacillus cereus (strain ATCC 14579 / DSM 31 / CCUG 7414 / JCM 2152 / NBRC 15305 / NCIMB 9373 / NCTC 2599 / NRRL B-3711)).